Consider the following 120-residue polypeptide: Ribonuclease P protein component (120 aa).

Belongs to the RnpA family. As to quaternary structure, consists of a catalytic RNA component (M1 or rnpB) and a protein subunit.

It catalyses the reaction Endonucleolytic cleavage of RNA, removing 5'-extranucleotides from tRNA precursor.. Functionally, RNaseP catalyzes the removal of the 5'-leader sequence from pre-tRNA to produce the mature 5'-terminus. It can also cleave other RNA substrates such as 4.5S RNA. The protein component plays an auxiliary but essential role in vivo by binding to the 5'-leader sequence and broadening the substrate specificity of the ribozyme. The polypeptide is Ribonuclease P protein component (Dehalococcoides mccartyi (strain CBDB1)).